Here is a 91-residue protein sequence, read N- to C-terminus: Mercuric transport protein periplasmic component (91 aa).

An N-terminal signal peptide occupies residues 1–19; sequence MKKLFASLALAAVVAPVWA. One can recognise an HMA domain in the interval 22–88; that stretch reads QTVTLSVPGM…ATADAGYPSS (67 aa). Hg(2+)-binding residues include cysteine 33 and cysteine 36.

This sequence belongs to the MerP family. Monomer.

The protein localises to the periplasm. In terms of biological role, involved in mercury resistance. Acts as a mercury scavenger that specifically binds to a mercuric ion in the periplasm and probably passes it to the cytoplasmic mercuric reductase MerA via the mercuric transport protein MerT. In Pseudomonas aeruginosa, this protein is Mercuric transport protein periplasmic component.